The chain runs to 245 residues: NAD-dependent protein deacylase (245 aa).

In terms of domain architecture, Deacetylase sirtuin-type spans 1–237 (MNFPYRNIVV…PKLVEELLAH (237 aa)). 13–32 (GAGISAESGIQTFRAQDGLW) provides a ligand contact to NAD(+). 2 residues coordinate substrate: tyrosine 57 and arginine 60. Residue 94–97 (QNID) participates in NAD(+) binding. Histidine 112 serves as the catalytic Proton acceptor. Residues cysteine 120 and cysteine 139 each contribute to the Zn(2+) site. NAD(+) is bound by residues 179–181 (GTS), 205–207 (NLE), and alanine 223.

Belongs to the sirtuin family. Class III subfamily. Requires Zn(2+) as cofactor.

The protein resides in the cytoplasm. The catalysed reaction is N(6)-acetyl-L-lysyl-[protein] + NAD(+) + H2O = 2''-O-acetyl-ADP-D-ribose + nicotinamide + L-lysyl-[protein]. It carries out the reaction N(6)-succinyl-L-lysyl-[protein] + NAD(+) + H2O = 2''-O-succinyl-ADP-D-ribose + nicotinamide + L-lysyl-[protein]. NAD-dependent lysine deacetylase and desuccinylase that specifically removes acetyl and succinyl groups on target proteins. Modulates the activities of several proteins which are inactive in their acylated form. The polypeptide is NAD-dependent protein deacylase (Vibrio vulnificus (strain YJ016)).